The sequence spans 351 residues: Probable aldo-keto reductase 2 (351 aa).

The active-site Proton donor is the tyrosine 67. Histidine 134 is a substrate binding site. NADP(+) is bound at residue 213–223 (SPLGRGFFSAG). The interval 317–351 (YASTDDVRGDRYPQAMANTTWQNSETPPLSSWKAQ) is disordered. The span at 332–351 (MANTTWQNSETPPLSSWKAQ) shows a compositional bias: polar residues.

Belongs to the aldo/keto reductase family.

This chain is Probable aldo-keto reductase 2, found in Oryza sativa subsp. indica (Rice).